Reading from the N-terminus, the 123-residue chain is Protein Wnt-7 (123 aa).

The O-palmitoleoyl serine; by PORCN moiety is linked to residue Ser1. Residues Asn79 and Asn90 are each glycosylated (N-linked (GlcNAc...) asparagine). Cys89 and Cys104 are joined by a disulfide.

It belongs to the Wnt family. Palmitoleoylation is required for efficient binding to frizzled receptors. Depalmitoleoylation leads to Wnt signaling pathway inhibition.

The protein resides in the secreted. The protein localises to the extracellular space. Its subcellular location is the extracellular matrix. Ligand for members of the frizzled family of seven transmembrane receptors. Probable developmental protein. May be a signaling molecule which affects the development of discrete regions of tissues. Is likely to signal over only few cell diameters. This is Protein Wnt-7 (WNT-7) from Strongylocentrotus purpuratus (Purple sea urchin).